A 780-amino-acid chain; its full sequence is uncharacterized protein (780 aa).

The region spanning 10–80 (NNNIIKLNIG…MRTGTFTLPY (71 aa)) is the BTB domain.

This is an uncharacterized protein from Dictyostelium discoideum (Social amoeba).